The primary structure comprises 375 residues: MDEAEASLLRHFPLLLPQNREKTVYEGFISAQGSDFHLRIVLPKDLQLKKARLLCSLQLKNILNEYHQVVQQRMKHSPDLMSFMMELKMILEVALKNKQELCVQPPSCSFCKDLLTEIGAIGWDKLACVESSFSTIKLKADDASGRKHLITVKLKAKYPVEPPDCVVDFPVPFSVSWTPQSSLVDVYSQFLVALETLKVFWDVMDEIDEKTWVLEPEKPPRSATARRIALGKNVSIAIEVDPRHPTMLPEFCFLGADHVTKPLGMKLSGSIHLWDPENSLLQNLKDVLEIDFPARSILEESDFSMDCGICYARHLNGAIPDQVCNNPQCGQPFHEICLYEWLRGLSTSRQSFNVFFGDCPYCSKPITLKMSGRKP.

Positions 104 to 294 (QPPSCSFCKD…KDVLEIDFPA (191 aa)) are UBC-RWD region (URD). An RING-type; degenerate zinc finger spans residues 307–363 (CGICYARHLNGAIPDQVCNNPQCGQPFHEICLYEWLRGLSTSRQSFNVFFGDCPYCS).

Belongs to the multisubunit FA complex composed of FANCA, FANCB, FANCC, FANCE, FANCF, FANCG, FANCL/PHF9 and FANCM. In complex with FANCF, FANCA and FANCG, but not with FANCC, nor FANCE, interacts with HES1; this interaction may be essential for the stability and nuclear localization of FA core complex proteins. Interacts with FANCI. Interacts with GGN. Interacts (via the RING-type zinc finger) with UBE2T and UBE2W. Post-translationally, the RING-type zinc finger domain is monoubiquitinated in the presence of UBE2T and UBE2W.

Its subcellular location is the cytoplasm. The protein resides in the nucleus. The catalysed reaction is S-ubiquitinyl-[E2 ubiquitin-conjugating enzyme]-L-cysteine + [acceptor protein]-L-lysine = [E2 ubiquitin-conjugating enzyme]-L-cysteine + N(6)-ubiquitinyl-[acceptor protein]-L-lysine.. Its pathway is protein modification; protein ubiquitination. In terms of biological role, ubiquitin ligase protein that mediates monoubiquitination of FANCD2, a key step in the DNA damage pathway. Also mediates monoubiquitination of FANCI. May stimulate the ubiquitin release from UBE2W. May be required for proper primordial germ cell proliferation in the embryonic stage, whereas it is probably not needed for spermatogonial proliferation after birth. The sequence is that of E3 ubiquitin-protein ligase FANCL (Fancl) from Mus musculus (Mouse).